Consider the following 308-residue polypeptide: Porphobilinogen deaminase (308 aa).

S-(dipyrrolylmethanemethyl)cysteine is present on cysteine 240.

This sequence belongs to the HMBS family. As to quaternary structure, monomer. Dipyrromethane is required as a cofactor.

It catalyses the reaction 4 porphobilinogen + H2O = hydroxymethylbilane + 4 NH4(+). It functions in the pathway porphyrin-containing compound metabolism; protoporphyrin-IX biosynthesis; coproporphyrinogen-III from 5-aminolevulinate: step 2/4. In terms of biological role, tetrapolymerization of the monopyrrole PBG into the hydroxymethylbilane pre-uroporphyrinogen in several discrete steps. The chain is Porphobilinogen deaminase from Maridesulfovibrio salexigens (strain ATCC 14822 / DSM 2638 / NCIMB 8403 / VKM B-1763) (Desulfovibrio salexigens).